Reading from the N-terminus, the 236-residue chain is 2,3,4,5-tetrahydropyridine-2,6-dicarboxylate N-acetyltransferase (236 aa).

It belongs to the transferase hexapeptide repeat family. DapH subfamily.

It catalyses the reaction (S)-2,3,4,5-tetrahydrodipicolinate + acetyl-CoA + H2O = L-2-acetamido-6-oxoheptanedioate + CoA. The protein operates within amino-acid biosynthesis; L-lysine biosynthesis via DAP pathway; LL-2,6-diaminopimelate from (S)-tetrahydrodipicolinate (acetylase route): step 1/3. Functionally, catalyzes the transfer of an acetyl group from acetyl-CoA to tetrahydrodipicolinate. In Bacillus subtilis (strain 168), this protein is 2,3,4,5-tetrahydropyridine-2,6-dicarboxylate N-acetyltransferase.